Reading from the N-terminus, the 464-residue chain is Soluble pyridine nucleotide transhydrogenase (464 aa).

An FAD-binding site is contributed by 35–44; that stretch reads DSRRQVGGNC.

The protein belongs to the class-I pyridine nucleotide-disulfide oxidoreductase family. The cofactor is FAD.

Its subcellular location is the cytoplasm. It carries out the reaction NAD(+) + NADPH = NADH + NADP(+). Its function is as follows. Conversion of NADPH, generated by peripheral catabolic pathways, to NADH, which can enter the respiratory chain for energy generation. The protein is Soluble pyridine nucleotide transhydrogenase of Pseudomonas savastanoi pv. phaseolicola (strain 1448A / Race 6) (Pseudomonas syringae pv. phaseolicola (strain 1448A / Race 6)).